The chain runs to 164 residues: SsrA-binding protein (164 aa).

The protein belongs to the SmpB family.

The protein resides in the cytoplasm. In terms of biological role, required for rescue of stalled ribosomes mediated by trans-translation. Binds to transfer-messenger RNA (tmRNA), required for stable association of tmRNA with ribosomes. tmRNA and SmpB together mimic tRNA shape, replacing the anticodon stem-loop with SmpB. tmRNA is encoded by the ssrA gene; the 2 termini fold to resemble tRNA(Ala) and it encodes a 'tag peptide', a short internal open reading frame. During trans-translation Ala-aminoacylated tmRNA acts like a tRNA, entering the A-site of stalled ribosomes, displacing the stalled mRNA. The ribosome then switches to translate the ORF on the tmRNA; the nascent peptide is terminated with the 'tag peptide' encoded by the tmRNA and targeted for degradation. The ribosome is freed to recommence translation, which seems to be the essential function of trans-translation. The protein is SsrA-binding protein of Corynebacterium efficiens (strain DSM 44549 / YS-314 / AJ 12310 / JCM 11189 / NBRC 100395).